The following is a 282-amino-acid chain: Large ribosomal subunit protein uL4c (282 aa).

The N-terminal 43 residues, 1 to 43 (MAASLSFFSSSIFLSNPNIQSSKHLLFRSPKQLSVAAIATIRS), are a transit peptide targeting the chloroplast. Disordered regions lie at residues 86 to 133 (RNQR…GGVV) and 251 to 282 (RYGD…ESSE). The span at 255 to 282 (ENEWEDEEEDDQEDNDGGEAEESTESSE) shows a compositional bias: acidic residues.

Belongs to the universal ribosomal protein uL4 family. As to quaternary structure, part of the 50S ribosomal subunit.

It is found in the plastid. Its subcellular location is the chloroplast. This protein binds directly and specifically to 23S rRNA. May play a role in plastid transcriptional regulation. The protein is Large ribosomal subunit protein uL4c (RPL4) of Nicotiana tabacum (Common tobacco).